A 745-amino-acid chain; its full sequence is Meiotic driver SPOK3 (745 aa).

Positions 4–34 (KDRITQLLRELEEAKAREAQERCEKERLQLE) form a coiled coil. Disordered stretches follow at residues 173–222 (ELTQ…DGVG) and 407–487 (LSSA…VDPQ). The span at 188–197 (TSDRSLERRQ) shows a compositional bias: basic and acidic residues. 2 stretches are compositionally biased toward polar residues: residues 208 to 217 (KSKYICSNRQ) and 409 to 422 (SAPSSQNTDISEYT). Residues 214 to 325 (SNRQPDGVGI…LLLYVDRDDW (112 aa)) form a required for antidote activity region. Basic and acidic residues predominate over residues 466–482 (AKRERGPSSGGKDDGRS). The tract at residues 491–745 (QYCTQACLLG…SPMATPSHGG (255 aa)) is required for poison activity.

Its subcellular location is the cytoplasm. It localises to the nucleus. Promotes unequal transmission of alleles from the parental zygote to progeny spores by acting as poison/antidote system, leading to poisoning of progeny that do not inherit the allele. May possess DNA nuclease activity that leads to spore killing, and a kinase activity that confers resistance to the nuclease activity. In Podospora anserina (Pleurage anserina), this protein is Meiotic driver SPOK3.